A 336-amino-acid polypeptide reads, in one-letter code: Serpentine receptor class beta-15 (336 aa).

A run of 7 helical transmembrane segments spans residues 24–44, 57–77, 109–129, 142–162, 186–206, 237–257, and 276–296; these read LFIHLFVSISSIIPLIYFVIF, FLFSAYFVSVFLFSVDFAIIS, IFMSLSTFFPISITIERFIAM, LGPILTGCNILLDLLIVFFIY, FTFFWVMFFLNLINFTFNSYL, VFVVFCHVILFGFYVIGIMIL, and GAFTTMISLYNLVVGSVAVYL.

The protein belongs to the nematode receptor-like protein srb family.

It localises to the membrane. This Caenorhabditis elegans protein is Serpentine receptor class beta-15 (srb-15).